The primary structure comprises 804 residues: Phenylalanine--tRNA ligase beta subunit (804 aa).

The tRNA-binding domain maps to 39–147 (GPSFSNVVVA…PNLPLGEDLA (109 aa)). The B5 domain occupies 402–480 (ETVGEIHLRC…RIHGYDNIPV (79 aa)). Mg(2+) is bound by residues aspartate 458, aspartate 464, glutamate 467, and glutamate 468. The FDX-ACB domain occupies 711 to 804 (SRYPESSRDV…IIDQTGARVR (94 aa)).

It belongs to the phenylalanyl-tRNA synthetase beta subunit family. Type 1 subfamily. Tetramer of two alpha and two beta subunits. Mg(2+) is required as a cofactor.

The protein resides in the cytoplasm. It carries out the reaction tRNA(Phe) + L-phenylalanine + ATP = L-phenylalanyl-tRNA(Phe) + AMP + diphosphate + H(+). This is Phenylalanine--tRNA ligase beta subunit from Syntrophus aciditrophicus (strain SB).